A 373-amino-acid chain; its full sequence is MSISFNLLHREINTRARLGKLKTPHGDIDTPIFMPVGTQATVKSMTPDELENIKAQIILSNTYHLYLRPGSSLIDEAGGLHNFMNWQKPILTDSGGFQVFSLSDLREIKEEGVYFRSHLDGSRHFISPEKAIQIQMELGADIIMAFDECPPYPSDYDYVARSLERTVRWARRCKKAHEREDQALFGIIQGGVYRDLRKQSVEALIDIGFPGYAIGGLSVGEEKEKMLEVLDFTVPLMPENKPRYLMGVGAPEDLVEGVIRGVDMFDCVLPTRIARHGTVFTSQGRLTVRNAGYERDFTPLDPECDCYVCKNYTRAYIRHLIKRKEILGVRLTTYHNLYFLLSLMEKIRGAIKEDALLEFRDEFLRKYLNKASI.

Catalysis depends on aspartate 93, which acts as the Proton acceptor. Substrate-binding positions include 93 to 97 (DSGGF), aspartate 147, glutamine 189, and glycine 216. Residues 247 to 253 (GVGAPED) are RNA binding. Aspartate 266 functions as the Nucleophile in the catalytic mechanism. Positions 271 to 275 (TRIAR) are RNA binding; important for wobble base 34 recognition. Zn(2+) is bound by residues cysteine 304, cysteine 306, cysteine 309, and histidine 335.

This sequence belongs to the queuine tRNA-ribosyltransferase family. In terms of assembly, homodimer. Within each dimer, one monomer is responsible for RNA recognition and catalysis, while the other monomer binds to the replacement base PreQ1. Zn(2+) is required as a cofactor.

The catalysed reaction is 7-aminomethyl-7-carbaguanine + guanosine(34) in tRNA = 7-aminomethyl-7-carbaguanosine(34) in tRNA + guanine. It participates in tRNA modification; tRNA-queuosine biosynthesis. In terms of biological role, catalyzes the base-exchange of a guanine (G) residue with the queuine precursor 7-aminomethyl-7-deazaguanine (PreQ1) at position 34 (anticodon wobble position) in tRNAs with GU(N) anticodons (tRNA-Asp, -Asn, -His and -Tyr). Catalysis occurs through a double-displacement mechanism. The nucleophile active site attacks the C1' of nucleotide 34 to detach the guanine base from the RNA, forming a covalent enzyme-RNA intermediate. The proton acceptor active site deprotonates the incoming PreQ1, allowing a nucleophilic attack on the C1' of the ribose to form the product. After dissociation, two additional enzymatic reactions on the tRNA convert PreQ1 to queuine (Q), resulting in the hypermodified nucleoside queuosine (7-(((4,5-cis-dihydroxy-2-cyclopenten-1-yl)amino)methyl)-7-deazaguanosine). In Halothermothrix orenii (strain H 168 / OCM 544 / DSM 9562), this protein is Queuine tRNA-ribosyltransferase.